The sequence spans 411 residues: ATP phosphoribosyltransferase 1, chloroplastic (411 aa).

Residues 1-12 (MSLLLPTNLQQY) show a composition bias toward polar residues. Residues 1-27 (MSLLLPTNLQQYPSSSSFPSSTPILSP) are disordered. Residues 1–49 (MSLLLPTNLQQYPSSSSFPSSTPILSPPPSTAFSVIVPRRRCLRLVTSC) constitute a chloroplast transit peptide. Positions 13–24 (PSSSSFPSSTPI) are enriched in low complexity. Val-50 bears the N-acetylvaline mark.

This sequence belongs to the ATP phosphoribosyltransferase family. Long subfamily. The cofactor is Mg(2+). In terms of tissue distribution, expressed in leaves and at lower levels in roots (at protein level).

The protein resides in the plastid. The protein localises to the chloroplast. It catalyses the reaction 1-(5-phospho-beta-D-ribosyl)-ATP + diphosphate = 5-phospho-alpha-D-ribose 1-diphosphate + ATP. It participates in amino-acid biosynthesis; L-histidine biosynthesis; L-histidine from 5-phospho-alpha-D-ribose 1-diphosphate: step 1/9. Feedback inhibited by L-histidine. In terms of biological role, catalyzes the condensation of ATP and 5-phosphoribose 1-diphosphate to form N'-(5'-phosphoribosyl)-ATP (PR-ATP). The chain is ATP phosphoribosyltransferase 1, chloroplastic (HISN1A) from Arabidopsis thaliana (Mouse-ear cress).